Consider the following 150-residue polypeptide: Transcription antitermination protein NusB (150 aa).

This sequence belongs to the NusB family.

Involved in transcription antitermination. Required for transcription of ribosomal RNA (rRNA) genes. Binds specifically to the boxA antiterminator sequence of the ribosomal RNA (rrn) operons. This is Transcription antitermination protein NusB from Chloroflexus aggregans (strain MD-66 / DSM 9485).